Reading from the N-terminus, the 624-residue chain is Chaperone protein HtpG (624 aa).

The segment at 1 to 338 (MNNKNKITHT…SQDLPLNISR (338 aa)) is a; substrate-binding. Residues 339–552 (EILQDSSITH…TNDMSTQMAK (214 aa)) are b. Positions 553–624 (IFSAAGQPIP…IQRINNFFIS (72 aa)) are c.

Belongs to the heat shock protein 90 family. As to quaternary structure, homodimer.

The protein localises to the cytoplasm. Molecular chaperone. Has ATPase activity. The protein is Chaperone protein HtpG of Buchnera aphidicola subsp. Cinara cedri (strain Cc).